The primary structure comprises 145 residues: Peptide methionine sulfoxide reductase MsrB (145 aa).

Residues 6–129 (KNERLKQLTD…NSAALRFIPV (124 aa)) enclose the MsrB domain. C118 acts as the Nucleophile in catalysis.

The protein belongs to the MsrB Met sulfoxide reductase family.

The catalysed reaction is L-methionyl-[protein] + [thioredoxin]-disulfide + H2O = L-methionyl-(R)-S-oxide-[protein] + [thioredoxin]-dithiol. This is Peptide methionine sulfoxide reductase MsrB from Listeria welshimeri serovar 6b (strain ATCC 35897 / DSM 20650 / CCUG 15529 / CIP 8149 / NCTC 11857 / SLCC 5334 / V8).